The chain runs to 232 residues: Large ribosomal subunit protein uL1 (232 aa).

The protein belongs to the universal ribosomal protein uL1 family. As to quaternary structure, part of the 50S ribosomal subunit.

Functionally, binds directly to 23S rRNA. The L1 stalk is quite mobile in the ribosome, and is involved in E site tRNA release. Protein L1 is also a translational repressor protein, it controls the translation of the L11 operon by binding to its mRNA. The polypeptide is Large ribosomal subunit protein uL1 (Xanthobacter autotrophicus (strain ATCC BAA-1158 / Py2)).